Consider the following 228-residue polypeptide: Octanoyltransferase (228 aa).

Residues 31–212 (EETDGILILL…KFEEVFEIKF (182 aa)) form the BPL/LPL catalytic domain. Residues 76–83 (RGGKITFH), 143–145 (AIG), and 156–158 (GIA) contribute to the substrate site. Cys174 (acyl-thioester intermediate) is an active-site residue.

Belongs to the LipB family.

It is found in the cytoplasm. It carries out the reaction octanoyl-[ACP] + L-lysyl-[protein] = N(6)-octanoyl-L-lysyl-[protein] + holo-[ACP] + H(+). It participates in protein modification; protein lipoylation via endogenous pathway; protein N(6)-(lipoyl)lysine from octanoyl-[acyl-carrier-protein]: step 1/2. Catalyzes the transfer of endogenously produced octanoic acid from octanoyl-acyl-carrier-protein onto the lipoyl domains of lipoate-dependent enzymes. Lipoyl-ACP can also act as a substrate although octanoyl-ACP is likely to be the physiological substrate. The chain is Octanoyltransferase from Caldanaerobacter subterraneus subsp. tengcongensis (strain DSM 15242 / JCM 11007 / NBRC 100824 / MB4) (Thermoanaerobacter tengcongensis).